We begin with the raw amino-acid sequence, 281 residues long: NADH-quinone oxidoreductase subunit B (281 aa).

The [4Fe-4S] cluster site is built by cysteine 37, cysteine 38, cysteine 103, and cysteine 132. Residues 242 to 281 form a disordered region; it reads DAKPLDESRAHGPGPTTADIADAADTADSDAAPGATHDTP. The span at 257-281 shows a compositional bias: low complexity; sequence TTADIADAADTADSDAAPGATHDTP.

The protein belongs to the complex I 20 kDa subunit family. In terms of assembly, NDH-1 is composed of 14 different subunits. Subunits NuoB, C, D, E, F, and G constitute the peripheral sector of the complex. The cofactor is [4Fe-4S] cluster.

It localises to the cell membrane. The catalysed reaction is a quinone + NADH + 5 H(+)(in) = a quinol + NAD(+) + 4 H(+)(out). Its function is as follows. NDH-1 shuttles electrons from NADH, via FMN and iron-sulfur (Fe-S) centers, to quinones in the respiratory chain. The immediate electron acceptor for the enzyme in this species is believed to be a menaquinone. Couples the redox reaction to proton translocation (for every two electrons transferred, four hydrogen ions are translocated across the cytoplasmic membrane), and thus conserves the redox energy in a proton gradient. The chain is NADH-quinone oxidoreductase subunit B from Frankia alni (strain DSM 45986 / CECT 9034 / ACN14a).